A 261-amino-acid chain; its full sequence is Cytochrome c oxidase subunit 3 (261 aa).

Residues 1-15 (MTHQTHAYHMVDPSP) lie on the Mitochondrial matrix side of the membrane. The chain crosses the membrane as a helical span at residues 16–34 (WPLTGALSALLMTSGLTMW). Topologically, residues 35-40 (FHYHSV) are mitochondrial intermembrane. Residues 41–66 (TLLLLGLTTNILTMFQWWRDVVREGT) form a helical membrane-spanning segment. At 67-72 (FQGHHT) the chain is on the mitochondrial matrix side. A helical membrane pass occupies residues 73–105 (PVVQESLRYGMILFITSEVLFFTGFFWAFYHSS). Residues 106–128 (LAPTPELGSYWPPVGVYPLNPLE) are Mitochondrial intermembrane-facing. The helical transmembrane segment at 129–152 (VPLLNTSVLLASGVTITWAHHSLM) threads the bilayer. Residues 153 to 155 (EGN) are Mitochondrial matrix-facing. A helical membrane pass occupies residues 156-183 (RKNMLQALLITILLGVYFTLLQMFEYYE). The Mitochondrial intermembrane portion of the chain corresponds to 184-190 (ASFTISD). Residues 191–223 (GIYGSTFFVTTGFHGLHVIIGSTFLLTCFIRQL) traverse the membrane as a helical segment. Topologically, residues 224 to 232 (KFHFTSNHH) are mitochondrial matrix. The chain crosses the membrane as a helical span at residues 233–256 (FGFEAAAWYWHFVDVVWLFLYLSI). The Mitochondrial intermembrane portion of the chain corresponds to 257–261 (YWWGS).

This sequence belongs to the cytochrome c oxidase subunit 3 family. As to quaternary structure, component of the cytochrome c oxidase (complex IV, CIV), a multisubunit enzyme composed of 14 subunits. The complex is composed of a catalytic core of 3 subunits MT-CO1, MT-CO2 and MT-CO3, encoded in the mitochondrial DNA, and 11 supernumerary subunits COX4I, COX5A, COX5B, COX6A, COX6B, COX6C, COX7A, COX7B, COX7C, COX8 and NDUFA4, which are encoded in the nuclear genome. The complex exists as a monomer or a dimer and forms supercomplexes (SCs) in the inner mitochondrial membrane with NADH-ubiquinone oxidoreductase (complex I, CI) and ubiquinol-cytochrome c oxidoreductase (cytochrome b-c1 complex, complex III, CIII), resulting in different assemblies (supercomplex SCI(1)III(2)IV(1) and megacomplex MCI(2)III(2)IV(2)).

The protein localises to the mitochondrion inner membrane. The enzyme catalyses 4 Fe(II)-[cytochrome c] + O2 + 8 H(+)(in) = 4 Fe(III)-[cytochrome c] + 2 H2O + 4 H(+)(out). Component of the cytochrome c oxidase, the last enzyme in the mitochondrial electron transport chain which drives oxidative phosphorylation. The respiratory chain contains 3 multisubunit complexes succinate dehydrogenase (complex II, CII), ubiquinol-cytochrome c oxidoreductase (cytochrome b-c1 complex, complex III, CIII) and cytochrome c oxidase (complex IV, CIV), that cooperate to transfer electrons derived from NADH and succinate to molecular oxygen, creating an electrochemical gradient over the inner membrane that drives transmembrane transport and the ATP synthase. Cytochrome c oxidase is the component of the respiratory chain that catalyzes the reduction of oxygen to water. Electrons originating from reduced cytochrome c in the intermembrane space (IMS) are transferred via the dinuclear copper A center (CU(A)) of subunit 2 and heme A of subunit 1 to the active site in subunit 1, a binuclear center (BNC) formed by heme A3 and copper B (CU(B)). The BNC reduces molecular oxygen to 2 water molecules using 4 electrons from cytochrome c in the IMS and 4 protons from the mitochondrial matrix. In Loxodonta africana (African elephant), this protein is Cytochrome c oxidase subunit 3 (MT-CO3).